The sequence spans 294 residues: 4-hydroxy-tetrahydrodipicolinate synthase (294 aa).

Position 44 (Thr44) interacts with pyruvate. Catalysis depends on Tyr132, which acts as the Proton donor/acceptor. The active-site Schiff-base intermediate with substrate is Lys161. A pyruvate-binding site is contributed by Ile203.

This sequence belongs to the DapA family. Homotetramer; dimer of dimers.

The protein localises to the cytoplasm. It catalyses the reaction L-aspartate 4-semialdehyde + pyruvate = (2S,4S)-4-hydroxy-2,3,4,5-tetrahydrodipicolinate + H2O + H(+). Its pathway is amino-acid biosynthesis; L-lysine biosynthesis via DAP pathway; (S)-tetrahydrodipicolinate from L-aspartate: step 3/4. Its function is as follows. Catalyzes the condensation of (S)-aspartate-beta-semialdehyde [(S)-ASA] and pyruvate to 4-hydroxy-tetrahydrodipicolinate (HTPA). The polypeptide is 4-hydroxy-tetrahydrodipicolinate synthase (Aquifex aeolicus (strain VF5)).